The sequence spans 137 residues: Large ribosomal subunit protein mL61 (137 aa).

It belongs to the mitochondrion-specific ribosomal protein mL61 family. Component of the mitochondrial large ribosomal subunit (mt-LSU). Mature yeast 74S mitochondrial ribosomes consist of a small (37S) and a large (54S) subunit. The 37S small subunit contains a 15S ribosomal RNA (15S mt-rRNA) and 34 different proteins. The 54S large subunit contains a 21S rRNA (21S mt-rRNA) and 46 different proteins.

The protein resides in the mitochondrion. Functionally, component of the mitochondrial ribosome (mitoribosome), a dedicated translation machinery responsible for the synthesis of mitochondrial genome-encoded proteins, including at least some of the essential transmembrane subunits of the mitochondrial respiratory chain. The mitoribosomes are attached to the mitochondrial inner membrane and translation products are cotranslationally integrated into the membrane. mL61 is not essential in cells grown at 30 degrees Celsius but is required for mitochondrial translation in cells grown at 18 degrees Celsius. This is Large ribosomal subunit protein mL61 (MRP49) from Saccharomyces cerevisiae (strain ATCC 204508 / S288c) (Baker's yeast).